A 145-amino-acid chain; its full sequence is D-aminoacyl-tRNA deacylase (145 aa).

The Gly-cisPro motif, important for rejection of L-amino acids motif lies at G137–P138.

It belongs to the DTD family. In terms of assembly, homodimer.

It is found in the cytoplasm. It catalyses the reaction glycyl-tRNA(Ala) + H2O = tRNA(Ala) + glycine + H(+). It carries out the reaction a D-aminoacyl-tRNA + H2O = a tRNA + a D-alpha-amino acid + H(+). Functionally, an aminoacyl-tRNA editing enzyme that deacylates mischarged D-aminoacyl-tRNAs. Also deacylates mischarged glycyl-tRNA(Ala), protecting cells against glycine mischarging by AlaRS. Acts via tRNA-based rather than protein-based catalysis; rejects L-amino acids rather than detecting D-amino acids in the active site. By recycling D-aminoacyl-tRNA to D-amino acids and free tRNA molecules, this enzyme counteracts the toxicity associated with the formation of D-aminoacyl-tRNA entities in vivo and helps enforce protein L-homochirality. In Shigella dysenteriae serotype 1 (strain Sd197), this protein is D-aminoacyl-tRNA deacylase.